Consider the following 641-residue polypeptide: Chaperone protein DnaK 2 (641 aa).

A Phosphothreonine; by autocatalysis modification is found at Thr199. A compositionally biased stretch (low complexity) spans 601-616 (MAQQQAQAQHAQSSQQ). The segment at 601–641 (MAQQQAQAQHAQSSQQTNDTTGQSSTDDDVFEAEFEEVKDK) is disordered. A compositionally biased stretch (acidic residues) spans 626 to 635 (TDDDVFEAEF).

Belongs to the heat shock protein 70 family.

Acts as a chaperone. This chain is Chaperone protein DnaK 2, found in Photobacterium profundum (strain SS9).